We begin with the raw amino-acid sequence, 184 residues long: Large ribosomal subunit protein uL5 (184 aa).

It belongs to the universal ribosomal protein uL5 family. In terms of assembly, part of the 50S ribosomal subunit; part of the 5S rRNA/L5/L18/L25 subcomplex. Contacts the 5S rRNA and the P site tRNA. Forms a bridge to the 30S subunit in the 70S ribosome.

Functionally, this is one of the proteins that bind and probably mediate the attachment of the 5S RNA into the large ribosomal subunit, where it forms part of the central protuberance. In the 70S ribosome it contacts protein S13 of the 30S subunit (bridge B1b), connecting the 2 subunits; this bridge is implicated in subunit movement. Contacts the P site tRNA; the 5S rRNA and some of its associated proteins might help stabilize positioning of ribosome-bound tRNAs. The chain is Large ribosomal subunit protein uL5 from Thermotoga maritima (strain ATCC 43589 / DSM 3109 / JCM 10099 / NBRC 100826 / MSB8).